We begin with the raw amino-acid sequence, 326 residues long: MSLGGGNVPVLGAGGWGTALAVAVTRAGHRATLWARRPDFAARLASERENGEYLPGVLLPAEVSVTSDLTHAVAGADFALVVVPSVGVPDLLAALPRDLGIVLCAKGLAPDGGRLTDLARSLGFARVAVLSGPNHAEEVGRGLPAATVVASADLELAGKVQATLISPTLRVYTSADEVGVELGGVLKNVIALATGLVDGLKLGDNAKAALITRGLREMGRYLVSQGAHEDTVYGLSGLGDLVATATSRHSRNRAAGEAIARGEHPQQGGKVVEGLRTAGLLDAWASAHGHDLPIVHAVAKVASGEWTPDVGIRSLMGRGAKSELEE.

Positions 16, 36, 37, and 106 each coordinate NADPH. Residues Lys106 and Gly132 each contribute to the sn-glycerol 3-phosphate site. Ala136 contacts NADPH. Sn-glycerol 3-phosphate contacts are provided by Lys187, Asp240, Ser250, Arg251, and Asn252. Lys187 (proton acceptor) is an active-site residue. An NADPH-binding site is contributed by Arg251. Residues Val271 and Glu273 each coordinate NADPH.

This sequence belongs to the NAD-dependent glycerol-3-phosphate dehydrogenase family.

Its subcellular location is the cytoplasm. It carries out the reaction sn-glycerol 3-phosphate + NAD(+) = dihydroxyacetone phosphate + NADH + H(+). The enzyme catalyses sn-glycerol 3-phosphate + NADP(+) = dihydroxyacetone phosphate + NADPH + H(+). It functions in the pathway membrane lipid metabolism; glycerophospholipid metabolism. Its function is as follows. Catalyzes the reduction of the glycolytic intermediate dihydroxyacetone phosphate (DHAP) to sn-glycerol 3-phosphate (G3P), the key precursor for phospholipid synthesis. The polypeptide is Glycerol-3-phosphate dehydrogenase [NAD(P)+] (Deinococcus geothermalis (strain DSM 11300 / CIP 105573 / AG-3a)).